The primary structure comprises 861 residues: Probable beta-glucosidase A (861 aa).

The signal sequence occupies residues 1–19; it reads MKLSILEAAALTAASVASA. Residues Asn62, Asn212, and Asn253 are each glycosylated (N-linked (GlcNAc...) asparagine). Residue Asp281 is part of the active site. N-linked (GlcNAc...) asparagine glycans are attached at residues Asn316, Asn323, Asn355, Asn524, Asn543, Asn565, Asn669, and Asn713. Residues 735–754 form a disordered region; the sequence is PEGATDGSPQPRLPASGGPG.

The protein belongs to the glycosyl hydrolase 3 family.

Its subcellular location is the secreted. The enzyme catalyses Hydrolysis of terminal, non-reducing beta-D-glucosyl residues with release of beta-D-glucose.. It functions in the pathway glycan metabolism; cellulose degradation. In terms of biological role, beta-glucosidases are one of a number of cellulolytic enzymes involved in the degradation of cellulosic biomass. Catalyzes the last step releasing glucose from the inhibitory cellobiose. This Aspergillus terreus protein is Probable beta-glucosidase A (bglA).